Here is a 335-residue protein sequence, read N- to C-terminus: Proline racemase (335 aa).

Cys-91 serves as the catalytic Proton acceptor. Cys-256 (proton donor) is an active-site residue.

Belongs to the proline racemase family.

It catalyses the reaction L-proline = D-proline. With respect to regulation, inhibited by pyrrole-2-carboxylate in vitro. In terms of biological role, catalyzes the reversible interconversion of L- and D-proline. Likely functions as the proline racemase necessary for D-proline generation in order to discriminate it from the L-proline used for protein synthesis. This Acetoanaerobium sticklandii (strain ATCC 12662 / DSM 519 / JCM 1433 / CCUG 9281 / NCIMB 10654 / HF) (Clostridium sticklandii) protein is Proline racemase.